The primary structure comprises 150 residues: Probable cyclase FGR4 (150 aa).

Its pathway is secondary metabolite biosynthesis. In terms of biological role, probable cyclase; part of the gene cluster that mediates the biosynthesis of the tetraketides fugralins such as linear fugralin A and cyclic fugralin B, volatile compounds that play a role in the asexual reproductive cycle but are not involved in pathogenicity. Fugralin B is similar to fugralin A except for a cyclization between the carboxylic acid C-8 and the alcohol on C-4 resulting in a six membered lactone ring, probably catalyzed by the cyclase FGR4. One of the key features of fugralins is the presence of a double methyl group, which is only rarely encountered in fungal secondary metabolites. As the fugralins cluster does not contain an independent methyltransferase, the PKS FGR1 is probably responsible for adding two methyl groups to the same carbon atom. The exact role of the individual cluster genes remains unknown and further work is needed to unravel the biosynthetic pathway. In Gibberella zeae (strain ATCC MYA-4620 / CBS 123657 / FGSC 9075 / NRRL 31084 / PH-1) (Wheat head blight fungus), this protein is Probable cyclase FGR4.